Reading from the N-terminus, the 177-residue chain is Isopentenyl-diphosphate Delta-isomerase (177 aa).

Mn(2+) contacts are provided by histidine 22 and histidine 28. The region spanning 26-160 is the Nudix hydrolase domain; sequence LRHMAISVFV…PERFTPWLRI (135 aa). Residue cysteine 62 is part of the active site. Mn(2+) is bound at residue histidine 64. Mg(2+) is bound at residue glutamate 82. Mn(2+)-binding residues include glutamate 108 and glutamate 110. Glutamate 110 is a catalytic residue.

The protein belongs to the IPP isomerase type 1 family. It depends on Mg(2+) as a cofactor. Requires Mn(2+) as cofactor.

Its subcellular location is the cytoplasm. The enzyme catalyses isopentenyl diphosphate = dimethylallyl diphosphate. Its pathway is isoprenoid biosynthesis; dimethylallyl diphosphate biosynthesis; dimethylallyl diphosphate from isopentenyl diphosphate: step 1/1. The protein operates within porphyrin-containing compound metabolism; chlorophyll biosynthesis. Its function is as follows. Catalyzes the 1,3-allylic rearrangement of the homoallylic substrate isopentenyl (IPP) to its highly electrophilic allylic isomer, dimethylallyl diphosphate (DMAPP). The protein is Isopentenyl-diphosphate Delta-isomerase of Cereibacter sphaeroides (strain ATCC 17029 / ATH 2.4.9) (Rhodobacter sphaeroides).